Here is a 57-residue protein sequence, read N- to C-terminus: Ribulose bisphosphate carboxylase large chain (57 aa).

Residues 1–2 (MS) constitute a propeptide that is removed on maturation. The residue at position 3 (Pro3) is an N-acetylproline. Lys14 is subject to N6,N6,N6-trimethyllysine.

It belongs to the RuBisCO large chain family. Type I subfamily. Heterohexadecamer of 8 large chains and 8 small chains.

The protein localises to the plastid. It is found in the chloroplast. It catalyses the reaction 2 (2R)-3-phosphoglycerate + 2 H(+) = D-ribulose 1,5-bisphosphate + CO2 + H2O. The enzyme catalyses D-ribulose 1,5-bisphosphate + O2 = 2-phosphoglycolate + (2R)-3-phosphoglycerate + 2 H(+). In terms of biological role, ruBisCO catalyzes two reactions: the carboxylation of D-ribulose 1,5-bisphosphate, the primary event in carbon dioxide fixation, as well as the oxidative fragmentation of the pentose substrate in the photorespiration process. Both reactions occur simultaneously and in competition at the same active site. The protein is Ribulose bisphosphate carboxylase large chain (rbcL) of Camellia sinensis (Tea plant).